The primary structure comprises 682 residues: Pesticidal crystal protein Cry19Ba (682 aa).

It belongs to the delta endotoxin family.

In terms of biological role, promotes colloidosmotic lysis by binding to the midgut epithelial cells of mosquitos. Has larvicidal activity against Culex pipiens molestus, but not to Anopheles stephensi. The chain is Pesticidal crystal protein Cry19Ba from Bacillus thuringiensis subsp. higo.